The following is a 721-amino-acid chain: Zinc-transporting ATPase (721 aa).

Over 1-107 (MTQSSPLKTQ…HSHGAGEFNL (107 aa)) the chain is Cytoplasmic. The HMA domain maps to 8–74 (KTQQMQVGGM…RIAALGYTLA (67 aa)). The Zn(2+) site is built by Cys-19 and Cys-22. A disordered region spans residues 80 to 101 (VTLNGHKHPHSHREEGHSHSHG). The chain crosses the membrane as a helical span at residues 108 to 128 (KQELLPVLTAIALFTIAILFE). Topologically, residues 129–140 (QPLHNTPGQIAE) are extracellular. Residues 141 to 160 (FAVIIPAYLLSGWTVLKTAG) traverse the membrane as a helical segment. At 161-167 (RNILRGQ) the chain is on the cytoplasmic side. A helical membrane pass occupies residues 168–187 (IFDENFLMTIATLGALAIHQ). The Extracellular portion of the chain corresponds to 188–190 (LPE). Residues 191–210 (AVAVMLFFRVGELFQEYSVG) traverse the membrane as a helical segment. Over 211-344 (RSRRSIKALL…ITQFARYYTP (134 aa)) the chain is Cytoplasmic. The helical transmembrane segment at 345–363 (VIVFLSLAVALLPPLFIPG) threads the bilayer. The Extracellular portion of the chain corresponds to 364–369 (ADRADW). The helical transmembrane segment at 370 to 387 (VYRALVLLVISCPCGLVI) threads the bilayer. The Cytoplasmic portion of the chain corresponds to 388 to 671 (SIPLGYFGGI…AIHVARKTRQ (284 aa)). The 4-aspartylphosphate intermediate role is filled by Asp-425. Residues Asp-618 and Asp-622 each coordinate Mg(2+). Residues 672–693 (IVVQNIVLALGIKALFIALGTI) form a helical membrane-spanning segment. Topologically, residues 694-701 (GLATLWEA) are extracellular. The helical transmembrane segment at 702-717 (VFADVGVALLAILNAT) threads the bilayer. The Cytoplasmic segment spans residues 718 to 721 (RIAK).

This sequence belongs to the cation transport ATPase (P-type) (TC 3.A.3) family. Type IB subfamily.

The protein resides in the cell membrane. It catalyses the reaction Zn(2+)(in) + ATP + H2O = Zn(2+)(out) + ADP + phosphate + H(+). The protein is Zinc-transporting ATPase (ziaA) of Synechocystis sp. (strain ATCC 27184 / PCC 6803 / Kazusa).